The sequence spans 357 residues: Putative DENN domain-containing protein 10 B (357 aa).

A uDENN domain is found at 1–140 (MAAAELADTQ…TKGICQSEEN (140 aa)). The 141-residue stretch at 159–299 (IKDIVSQFGM…PEKSESQVIQ (141 aa)) folds into the cDENN domain. One can recognise a dDENN domain in the interval 301–357 (IALKTREIFTNLAPFSEVSADGEKRVLNLEALKQKRFPPATENFLYHLAAAEQMLKI).

It belongs to the DENND10 family.

The protein resides in the late endosome. Functionally, may be a guanine nucleotide exchange factor (GEF). This Homo sapiens (Human) protein is Putative DENN domain-containing protein 10 B.